Reading from the N-terminus, the 38-residue chain is Conotoxin FVIA (38 aa).

Residues 1 to 12 (ILSLSLLDRSTR) constitute a propeptide that is removed on maturation. Disulfide bonds link cysteine 13-cysteine 28, cysteine 20-cysteine 32, and cysteine 27-cysteine 37. Cysteine 37 carries the cysteine amide modification.

The protein belongs to the conotoxin O1 superfamily. In terms of tissue distribution, expressed by the venom duct.

It is found in the secreted. Functionally, omega-conotoxins act at presynaptic membranes, they bind and block voltage-gated calcium channels (Cav). This peptide reversibly and selectively inhibits Cav2.2/CACNA1B (IC(50)=11.5 nM) voltage-gated calcium channels. Channel time recovery after toxin exposure is short (about 50 seconds). In vivo, it effectively and dose-dependently reduces nociceptive behavior in the formalin test and in neuropathic pain models, and reduces mechanical and thermal allodynia in the tail nerve injury rat model. It also shows significant analgesic effects on writhing in mouse neurotransmitter- and cytokine-induced pain models, though it has no effect on acute thermal pain and interferon-gamma-induced pain. It also depresses blood pressure immediately after administration, but pressure recovers relatively quickly and completely. This Conus fulmen (Thunderbolt cone) protein is Conotoxin FVIA.